Reading from the N-terminus, the 419-residue chain is Vascular endothelial growth factor C (419 aa).

The signal sequence occupies residues 1–31; the sequence is MHLLGFFSVACSLLAAALLPGPREAPAAAAA. Residues 32 to 111 constitute a propeptide, or 102; that stretch reads FESGLDLSDA…RTEETIKFAA (80 aa). Disulfide bonds link C131–C173, C162–C209, and C166–C211. 3 N-linked (GlcNAc...) asparagine glycosylation sites follow: N175, N205, and N240. A propeptide spanning residues 228–419 is cleaved from the precursor; it reads SLPATLPQCQ…PSYWKRPQMS (192 aa). 4 repeat units span residues 280–295, 304–319, 328–343, and 347–362. Residues 280 to 362 are 4 X 16 AA repeats of C-X(10)-C-X-C-X(1,3)-C; sequence CGPNKELDEE…LNPGKCACEC (83 aa).

This sequence belongs to the PDGF/VEGF growth factor family. In terms of assembly, homodimer; non-covalent and antiparallel. Interacts with FLT4/VEGFR3; the interaction is required for FLT4/VEGFR3 homodimarization and activation. In terms of processing, undergoes a complex proteolytic maturation which generates a variety of processed secreted forms with increased activity toward VEGFR-3, but only the fully processed form could activate VEGFR-2. VEGF-C first form an antiparallel homodimer linked by disulfide bonds. Before secretion, a cleavage occurs between Arg-227 and Ser-228 producing a heterotetramer. The next extracellular step of the processing removes the N-terminal propeptide. Finally the mature VEGF-C is composed mostly of two VEGF homology domains (VHDs) bound by non-covalent interactions. Expressed in the spleen. Expressed in the lymph node, thymus, appendix and bone marrow. Expressed in the heart, placenta, skeletal muscle, ovary and small intestine. Expressed in the prostate, testis and colon.

It is found in the secreted. Growth factor active in angiogenesis, and endothelial cell growth, stimulating their proliferation and migration and also has effects on the permeability of blood vessels. May function in angiogenesis of the venous and lymphatic vascular systems during embryogenesis, and also in the maintenance of differentiated lymphatic endothelium in adults. Binds and activates KDR/VEGFR2 and FLT4/VEGFR3 receptors. In Homo sapiens (Human), this protein is Vascular endothelial growth factor C (VEGFC).